We begin with the raw amino-acid sequence, 203 residues long: V-type ATP synthase subunit D (203 aa).

The protein belongs to the V-ATPase D subunit family.

Its function is as follows. Produces ATP from ADP in the presence of a proton gradient across the membrane. This Streptococcus pneumoniae serotype 19F (strain G54) protein is V-type ATP synthase subunit D.